We begin with the raw amino-acid sequence, 517 residues long: Crotonobetaine/carnitine--CoA ligase (517 aa).

It belongs to the ATP-dependent AMP-binding enzyme family.

The enzyme catalyses 4-(trimethylamino)butanoate + ATP + CoA = 4-(trimethylamino)butanoyl-CoA + AMP + diphosphate. The catalysed reaction is crotonobetaine + ATP + CoA = crotonobetainyl-CoA + AMP + diphosphate. It catalyses the reaction (R)-carnitine + ATP + CoA = (R)-carnitinyl-CoA + AMP + diphosphate. Its pathway is amine and polyamine metabolism; carnitine metabolism. Functionally, catalyzes the transfer of CoA to carnitine, generating the initial carnitinyl-CoA needed for the CaiB reaction cycle. Also has activity toward crotonobetaine and gamma-butyrobetaine. The chain is Crotonobetaine/carnitine--CoA ligase from Salmonella paratyphi B (strain ATCC BAA-1250 / SPB7).